We begin with the raw amino-acid sequence, 428 residues long: 3-phosphoshikimate 1-carboxyvinyltransferase (428 aa).

Positions 23, 24, and 28 each coordinate 3-phosphoshikimate. Lys23 is a binding site for phosphoenolpyruvate. The phosphoenolpyruvate site is built by Gly97 and Arg125. 3-phosphoshikimate contacts are provided by Ser170, Ser171, Gln172, Ser198, Asp314, Asn337, and Lys341. Residue Gln172 coordinates phosphoenolpyruvate. The active-site Proton acceptor is the Asp314. Positions 345, 387, and 412 each coordinate phosphoenolpyruvate.

It belongs to the EPSP synthase family. As to quaternary structure, monomer.

It localises to the cytoplasm. It carries out the reaction 3-phosphoshikimate + phosphoenolpyruvate = 5-O-(1-carboxyvinyl)-3-phosphoshikimate + phosphate. It functions in the pathway metabolic intermediate biosynthesis; chorismate biosynthesis; chorismate from D-erythrose 4-phosphate and phosphoenolpyruvate: step 6/7. Catalyzes the transfer of the enolpyruvyl moiety of phosphoenolpyruvate (PEP) to the 5-hydroxyl of shikimate-3-phosphate (S3P) to produce enolpyruvyl shikimate-3-phosphate and inorganic phosphate. In Cronobacter sakazakii (strain ATCC BAA-894) (Enterobacter sakazakii), this protein is 3-phosphoshikimate 1-carboxyvinyltransferase.